The sequence spans 624 residues: Iron transport multicopper oxidase FET3 (624 aa).

A signal peptide spans 1-20 (MRTFLSSFIILTTFLASLIA). Residues 21 to 555 (AETHTWYFKT…KRLPTGFTTK (535 aa)) lie on the Extracellular side of the membrane. Plastocyanin-like domains follow at residues 46 to 144 (IGFN…FIIE) and 190 to 292 (NFLF…LQVN). N-linked (GlcNAc...) asparagine glycosylation is found at asparagine 49 and asparagine 77. Cu cation-binding residues include histidine 81 and histidine 83. A glycan (N-linked (GlcNAc...) asparagine) is linked at asparagine 113. Positions 126 and 128 each coordinate Cu cation. 7 N-linked (GlcNAc...) asparagine glycosylation sites follow: asparagine 194, asparagine 198, asparagine 244, asparagine 265, asparagine 292, asparagine 300, and asparagine 359. The Plastocyanin-like 3 domain maps to 382–499 (NELIYGTNTN…QGLAVVLIED (118 aa)). Cu cation is bound by residues histidine 413, histidine 416, and histidine 418. Residue asparagine 441 is glycosylated (N-linked (GlcNAc...) asparagine). 4 residues coordinate Cu cation: histidine 481, cysteine 482, histidine 483, and histidine 487. Residues 556–576 (GIVALVFSCVAAFLGLFSFSF) form a helical membrane-spanning segment. Topologically, residues 577 to 624 (YGMNDIAHVEDKVARDLDIDLEAENEDEEEAVVLNQNSSSSDSNSKPH) are cytoplasmic. The tract at residues 603 to 624 (DEEEAVVLNQNSSSSDSNSKPH) is disordered. Positions 608–624 (VVLNQNSSSSDSNSKPH) are enriched in low complexity.

The protein belongs to the multicopper oxidase family. Cu cation is required as a cofactor.

It localises to the cell membrane. Its function is as follows. Iron transport multicopper ferroxidase required for Fe(2+) high affinity uptake. Required to oxidize Fe(2+) and release it from the transporter. Essential component of copper-dependent iron transport. This chain is Iron transport multicopper oxidase FET3 (FET3), found in Candida albicans (Yeast).